The sequence spans 672 residues: Rho GTPase-activating protein 40 (672 aa).

The disordered stretch occupies residues 43–68 (GCSPGLSTGPTNLQQHPQKPRPADCS). The segment covering 47–59 (GLSTGPTNLQQHP) has biased composition (polar residues). Positions 321–519 (VPLHSLLEAD…MMVQYQDLLW (199 aa)) constitute a Rho-GAP domain.

Its function is as follows. GTPase activator for the Rho-type GTPases by converting them to an inactive GDP-bound state. This chain is Rho GTPase-activating protein 40, found in Mus musculus (Mouse).